The chain runs to 560 residues: CTP synthase (560 aa).

Residues 1 to 272 (MSIGDVCSAR…DTQILSHFGM (272 aa)) are amidoligase domain. Ser20 is a CTP binding site. UTP is bound at residue Ser20. Residues 21–26 (SLGKGL) and Asp78 contribute to the ATP site. The Mg(2+) site is built by Asp78 and Glu146. CTP-binding positions include 153–155 (DIE), 193–198 (KTKPTQ), and Lys229. UTP is bound by residues 193–198 (KTKPTQ) and Lys229. The 243-residue stretch at 297–539 (TIAIIGKYTK…VQNVLQIKQR (243 aa)) folds into the Glutamine amidotransferase type-1 domain. Gly356 is an L-glutamine binding site. Cys383 functions as the Nucleophile; for glutamine hydrolysis in the catalytic mechanism. L-glutamine contacts are provided by residues 384–387 (MGMQ), Glu407, and Arg467. Active-site residues include His512 and Glu514.

The protein belongs to the CTP synthase family. As to quaternary structure, homotetramer.

The catalysed reaction is UTP + L-glutamine + ATP + H2O = CTP + L-glutamate + ADP + phosphate + 2 H(+). It carries out the reaction L-glutamine + H2O = L-glutamate + NH4(+). It catalyses the reaction UTP + NH4(+) + ATP = CTP + ADP + phosphate + 2 H(+). It participates in pyrimidine metabolism; CTP biosynthesis via de novo pathway; CTP from UDP: step 2/2. Its activity is regulated as follows. Allosterically activated by GTP, when glutamine is the substrate; GTP has no effect on the reaction when ammonia is the substrate. The allosteric effector GTP functions by stabilizing the protein conformation that binds the tetrahedral intermediate(s) formed during glutamine hydrolysis. Inhibited by the product CTP, via allosteric rather than competitive inhibition. In terms of biological role, catalyzes the ATP-dependent amination of UTP to CTP with either L-glutamine or ammonia as the source of nitrogen. Regulates intracellular CTP levels through interactions with the four ribonucleotide triphosphates. This is CTP synthase from Anaplasma marginale (strain Florida).